We begin with the raw amino-acid sequence, 65 residues long: Conotoxin mr5.1b (65 aa).

An N-terminal signal peptide occupies residues 1 to 19 (MRCVPVFVILLLLIASAPS). The propeptide occupies 20 to 48 (VDARLKTKDDMPLPSSHANIKRTLQMLRN). Position 60 is a 4-carboxyglutamate (Glu60).

This sequence belongs to the conotoxin T superfamily. In terms of processing, contains 2 disulfide bonds that can be either 'C1-C3, C2-C4' or 'C1-C4, C2-C3', since these disulfide connectivities have been observed for conotoxins with cysteine framework V (for examples, see AC P0DQQ7 and AC P81755). As to expression, expressed by the venom duct.

Its subcellular location is the secreted. In Conus marmoreus (Marble cone), this protein is Conotoxin mr5.1b.